The primary structure comprises 473 residues: Aspartyl/glutamyl-tRNA(Asn/Gln) amidotransferase subunit B (473 aa).

It belongs to the GatB/GatE family. GatB subfamily. In terms of assembly, heterotrimer of A, B and C subunits.

It catalyses the reaction L-glutamyl-tRNA(Gln) + L-glutamine + ATP + H2O = L-glutaminyl-tRNA(Gln) + L-glutamate + ADP + phosphate + H(+). The catalysed reaction is L-aspartyl-tRNA(Asn) + L-glutamine + ATP + H2O = L-asparaginyl-tRNA(Asn) + L-glutamate + ADP + phosphate + 2 H(+). In terms of biological role, allows the formation of correctly charged Asn-tRNA(Asn) or Gln-tRNA(Gln) through the transamidation of misacylated Asp-tRNA(Asn) or Glu-tRNA(Gln) in organisms which lack either or both of asparaginyl-tRNA or glutaminyl-tRNA synthetases. The reaction takes place in the presence of glutamine and ATP through an activated phospho-Asp-tRNA(Asn) or phospho-Glu-tRNA(Gln). This is Aspartyl/glutamyl-tRNA(Asn/Gln) amidotransferase subunit B from Campylobacter hominis (strain ATCC BAA-381 / DSM 21671 / CCUG 45161 / LMG 19568 / NCTC 13146 / CH001A).